Consider the following 460-residue polypeptide: Baeyer-Villiger oxidase AgnL3 (460 aa).

This sequence belongs to the questin oxidase family. NADPH serves as cofactor.

The protein operates within secondary metabolite biosynthesis. Baeyer-Villiger oxidase; part of the gene cluster that mediates the biosynthesis of agnestins, dihydroxy-xanthone metabolites. The pathway begins with the assembly and cyclization of atrochrysone thioester by the non-reducing polyketide synthase Agnpks1. The atrochrysone carboxyl ACP thioesterase AgnL7 then breaks the thioester bond and releases the atrochrysone carboxylic acid as the first enzyme-free intermediate. The decarboxylase AgnL1 then catalyzes the concerted decarboxylation-elimination required to convert atochrysone carboxylic acid into emodin anthrone, which is further oxidized to emodin by the anthrone oxygenase AgnL2. Emodin then undergoes reduction catalyzed by the oxidoreductase AgnL4 to yield the dihydroquinone tautomer which is the substrate for reduction by the short chain dehydrogenase AgnL6 reduction to produce hydroxyketone, followed by AgnL8 dehydration and likely spontaneous autoxidation to chrysophanol. Baeyer-Villiger oxidation by the oxidase AgnL3 leads to monodictyphenone via cleavage of the C-10/C-10a bond of chrysophanol. Alternative cleavage at the C-4a/C-10 bond of chrysophanol also leads to the formation some cephalone F. Further conversion to agnestins A and B, requires reduction to dihydro-monodictyphenone, oxidation to agnestin C probably via an epoxide, and rearrangement to either agnestin A or agnestin B directly, although agnestin A or agnestin B can also interconvert. Within the cluster, AgnR1 is the only unassigned oxidoreductase present which could be involved in this conversion. However, AgnR1 seems not to be involved in this step, and thus genes involved in the proposed oxidation/reduction may be located elsewhere on the genome. Further agnestin A derivatives are probably formed by spontaneous decarboxylations, dehydrations and methanolysis reactions. The protein is Baeyer-Villiger oxidase AgnL3 of Paecilomyces divaricatus (Penicillium divaricatum).